The following is a 521-amino-acid chain: uncharacterized protein (521 aa).

The next 10 helical transmembrane spans lie at 103 to 123, 136 to 156, 177 to 197, 200 to 220, 259 to 279, 299 to 319, 327 to 346, 358 to 378, 411 to 431, and 450 to 470; these read NLMLQVLAPCFVLLWCAVPMP, FWFFLIFYYGIYNAVGLLWIT, YILFWMFSLLVGSLVVYFTAW, ITFTWITLMFISMIIPIGISF, AYAHYSWFIVVLLVTLLVYIV, IMYVYSWTGTVSLCNLVSSWI, YALVTVFKLYFELTLQVYVR, FVLVQIASSLTMMSVIPLITM, CVASNVSMLSFLGWSLILHFG, and FKLTFYASTAVWISEMVASYL.

Its subcellular location is the membrane. This is an uncharacterized protein from Schizosaccharomyces pombe (strain 972 / ATCC 24843) (Fission yeast).